A 405-amino-acid polypeptide reads, in one-letter code: Cystathionine gamma-lyase (405 aa).

Residues Arg62, Tyr114, and Arg119 each contribute to the substrate site. Lys212 carries the N6-(pyridoxal phosphate)lysine modification. Residue Glu339 participates in substrate binding.

Belongs to the trans-sulfuration enzymes family. In terms of assembly, homotetramer. Interacts with CALM in a calcium-dependent manner. Requires pyridoxal 5'-phosphate as cofactor.

The protein localises to the cytoplasm. The enzyme catalyses L,L-cystathionine + H2O = 2-oxobutanoate + L-cysteine + NH4(+). It catalyses the reaction L-cysteine + H2O = hydrogen sulfide + pyruvate + NH4(+) + H(+). It carries out the reaction L-homocysteine + H2O = 2-oxobutanoate + hydrogen sulfide + NH4(+) + H(+). The catalysed reaction is L-homoserine = 2-oxobutanoate + NH4(+). The enzyme catalyses L-selenocystathionine + H2O = L-selenocysteine + 2-oxobutanoate + NH4(+). Its pathway is amino-acid biosynthesis; L-cysteine biosynthesis; L-cysteine from L-homocysteine and L-serine: step 2/2. Catalyzes the last step in the trans-sulfuration pathway from L-methionine to L-cysteine in a pyridoxal-5'-phosphate (PLP)-dependent manner, which consists on cleaving the L,L-cystathionine molecule into L-cysteine, ammonia and 2-oxobutanoate. Part of the L-cysteine derived from the trans-sulfuration pathway is utilized for biosynthesis of the ubiquitous antioxidant glutathione. Besides its role in the conversion of L-cystathionine into L-cysteine, it utilizes L-cysteine and L-homocysteine as substrates (at much lower rates than L,L-cystathionine) to produce hydrogen sulfide (H2S). In vitro, it converts two L-cysteine molecules into lanthionine and H2S, and two L-homocysteine molecules to homolanthionine and H2S, which can be particularly relevant under conditions of severe hyperhomocysteinemia. Lanthionine and homolanthionine are structural homologs of L,L-cystathionine that differ by the absence or presence of an extra methylene group, respectively. Acts as a cysteine-protein sulfhydrase by mediating sulfhydration of target proteins: sulfhydration consists of converting -SH groups into -SSH on specific cysteine residues of target proteins such as GAPDH, PTPN1 and NF-kappa-B subunit RELA, thereby regulating their function. By generating the gasotransmitter H2S, it participates in a number of physiological processes such as vasodilation, bone protection, and inflammation. Plays an essential role in myogenesis by contributing to the biogenesis of H2S in skeletal muscle tissue. Can also accept homoserine as substrate. Catalyzes the elimination of selenocystathionine (which can be derived from the diet) to yield selenocysteine, ammonia and 2-oxobutanoate. The chain is Cystathionine gamma-lyase (CTH) from Sus scrofa (Pig).